A 234-amino-acid chain; its full sequence is Ribonuclease HII (234 aa).

An RNase H type-2 domain is found at Ile-47–Glu-234. The a divalent metal cation site is built by Asp-53, Glu-54, and Asp-144.

Belongs to the RNase HII family. Mn(2+) serves as cofactor. Mg(2+) is required as a cofactor.

Its subcellular location is the cytoplasm. It catalyses the reaction Endonucleolytic cleavage to 5'-phosphomonoester.. Its function is as follows. Endonuclease that specifically degrades the RNA of RNA-DNA hybrids. The chain is Ribonuclease HII from Ruegeria pomeroyi (strain ATCC 700808 / DSM 15171 / DSS-3) (Silicibacter pomeroyi).